A 378-amino-acid chain; its full sequence is Chaperone protein DnaJ 2 (378 aa).

The region spanning 4–68 is the J domain; it reads DYYAVLGVRR…QKKQVYDLGG (65 aa). A CR-type zinc finger spans residues 130–212; the sequence is GTTKDIQVET…CAGDGRVRSR (83 aa). Zn(2+) contacts are provided by cysteine 143, cysteine 146, cysteine 160, cysteine 163, cysteine 186, cysteine 189, cysteine 200, and cysteine 203. CXXCXGXG motif repeat units follow at residues 143–150, 160–167, 186–193, and 200–207; these read CTTCSGEG, CDMCRGRG, CPQCQGFG, and CPECAGDG. The segment at 351-378 is disordered; that stretch reads RGEERPTGQFQPGQQGLFSRLKDAFNGR. The span at 358-367 shows a compositional bias: polar residues; that stretch reads GQFQPGQQGL.

The protein belongs to the DnaJ family. In terms of assembly, homodimer. It depends on Zn(2+) as a cofactor.

It is found in the cytoplasm. Its function is as follows. Participates actively in the response to hyperosmotic and heat shock by preventing the aggregation of stress-denatured proteins and by disaggregating proteins, also in an autonomous, DnaK-independent fashion. Unfolded proteins bind initially to DnaJ; upon interaction with the DnaJ-bound protein, DnaK hydrolyzes its bound ATP, resulting in the formation of a stable complex. GrpE releases ADP from DnaK; ATP binding to DnaK triggers the release of the substrate protein, thus completing the reaction cycle. Several rounds of ATP-dependent interactions between DnaJ, DnaK and GrpE are required for fully efficient folding. Also involved, together with DnaK and GrpE, in the DNA replication of plasmids through activation of initiation proteins. This chain is Chaperone protein DnaJ 2, found in Streptomyces avermitilis (strain ATCC 31267 / DSM 46492 / JCM 5070 / NBRC 14893 / NCIMB 12804 / NRRL 8165 / MA-4680).